A 272-amino-acid polypeptide reads, in one-letter code: Auxin-responsive protein IAA5 (272 aa).

Positions Met1–Ser92 are disordered. 2 stretches are compositionally biased toward low complexity: residues Ser14–Pro33 and Pro40–Gly50. The EAR-like (transcriptional repression) signature appears at Leu44–Leu48. A PB1 domain is found at Pro152–Asp256.

The protein belongs to the Aux/IAA family. In terms of assembly, homodimers and heterodimers. As to expression, highly expressed in roots and flowers. Expressed in shoots.

It localises to the nucleus. Its function is as follows. Aux/IAA proteins are short-lived transcriptional factors that function as repressors of early auxin response genes at low auxin concentrations. This is Auxin-responsive protein IAA5 (IAA5) from Oryza sativa subsp. indica (Rice).